The primary structure comprises 700 residues: Phenylalanine ammonia-lyase hkm12 (700 aa).

Tyr82 (proton donor/acceptor) is an active-site residue. The 5-imidazolinone (Ala-Gly) cross-link spans 183-185 (ASG). Residue Ser184 is modified to 2,3-didehydroalanine (Ser). (E)-cinnamate contacts are provided by Asn242, Gln325, Arg331, Asn361, Lys432, Glu460, and Asn463.

The protein belongs to the PAL/histidase family. In terms of processing, contains an active site 4-methylidene-imidazol-5-one (MIO), which is formed autocatalytically by cyclization and dehydration of residues Ala-Ser-Gly.

It catalyses the reaction L-phenylalanine = (E)-cinnamate + NH4(+). It functions in the pathway secondary metabolite biosynthesis. Its function is as follows. Phenylalanine ammonia-lyase; part of the gene cluster that mediates the biosynthesis of hancockiamides, an unusual new family of N-cinnamoylated piperazines. The NRPS hkm10 and the NmrA-like reductase hkm9 are proposed to convert two molecules of L-Phe to the intermediary piperazine called xenocockiamide A. Xenocockiamide A is then converted to hancockiamide D via a series of hydroxylations and O-methylations. The tyrosinase hkm6 may catalyze an aromatic hydroxylation, then the 2-oxoglutarate-dependent Fe(II) dioxygenase hkm4 and the FAD-dependent phenol hydroxylase hkm7 may catalyze consecutive hydroxylations to install 2 more hydroxy groups, and the methyltransferase hkm8 probably catalyzes two methylations using 2 molecules of S-adenosyl-L-methionine (SAM). The NRPS hkm11 activates and transfers trans-cinnamate supplied by the PAL hkm12 to hancockiamide D and produces hancockiamide A. NRPS Hkm11 has the flexibility to tolerate the bulky hancockiamide G as a substrate and the absence of the acetyl-transferase hkm3 opens up the opportunity for hkm11 to introduce a second N-cinnamoyl moiety. The cytochrome P450 monooxygenase hkm5 catalyzes the methylenedioxy bridge formation, converting hancockiamide A into hancockiamide G. Hkm5 can also convert hancockiamide B into hancockiamide C, and hancockiamide D into hancockiamide H. The N-acetyltransferase hkm3 finally transfers an acetyl group to 1-N of piperazine, converting hancockiamide A into hancockiamide B and hancockiamide G into hancockiamide C. This is Phenylalanine ammonia-lyase hkm12 from Aspergillus hancockii.